A 427-amino-acid polypeptide reads, in one-letter code: L-cysteine:1D-myo-inositol 2-amino-2-deoxy-alpha-D-glucopyranoside ligase (427 aa).

C46 provides a ligand contact to Zn(2+). Residues 46–49, T61, and 84–86 each bind L-cysteinyl-5'-AMP; these read CGIT and NVT. The short motif at 48 to 58 is the 'HIGH' region element; it reads ITPYDATHMGH. The short motif at 186 to 191 is the 'ERGGDP' region element; the sequence is ERGGDP. Residue W233 coordinates L-cysteinyl-5'-AMP. A Zn(2+)-binding site is contributed by C237. Residue 255–257 coordinates L-cysteinyl-5'-AMP; the sequence is GSD. Residue H262 coordinates Zn(2+). Position 289 (V289) interacts with L-cysteinyl-5'-AMP. A 'KMSKS' region motif is present at residues 295-299; sequence KMSKS.

It belongs to the class-I aminoacyl-tRNA synthetase family. MshC subfamily. As to quaternary structure, monomer. It depends on Zn(2+) as a cofactor.

The catalysed reaction is 1D-myo-inositol 2-amino-2-deoxy-alpha-D-glucopyranoside + L-cysteine + ATP = 1D-myo-inositol 2-(L-cysteinylamino)-2-deoxy-alpha-D-glucopyranoside + AMP + diphosphate + H(+). Functionally, catalyzes the ATP-dependent condensation of GlcN-Ins and L-cysteine to form L-Cys-GlcN-Ins. In Catenulispora acidiphila (strain DSM 44928 / JCM 14897 / NBRC 102108 / NRRL B-24433 / ID139908), this protein is L-cysteine:1D-myo-inositol 2-amino-2-deoxy-alpha-D-glucopyranoside ligase.